A 461-amino-acid polypeptide reads, in one-letter code: Ribulose bisphosphate carboxylase (461 aa).

Asn112 contacts substrate. The active-site Proton acceptor is the Lys167. Lys169 lines the substrate pocket. Residues Lys192, Asp194, and Glu195 each coordinate Mg(2+). Lys192 bears the N6-carboxylysine mark. Catalysis depends on His288, which acts as the Proton acceptor. 3 residues coordinate substrate: Arg289, His322, and Ser369.

The protein belongs to the RuBisCO large chain family. Type II subfamily. As to quaternary structure, homodimer. Mg(2+) serves as cofactor.

The enzyme catalyses 2 (2R)-3-phosphoglycerate + 2 H(+) = D-ribulose 1,5-bisphosphate + CO2 + H2O. The catalysed reaction is D-ribulose 1,5-bisphosphate + O2 = 2-phosphoglycolate + (2R)-3-phosphoglycerate + 2 H(+). Functionally, ruBisCO catalyzes two reactions: the carboxylation of D-ribulose 1,5-bisphosphate, the primary event in carbon dioxide fixation, as well as the oxidative fragmentation of the pentose substrate. Both reactions occur simultaneously and in competition at the same active site. In Rhodopseudomonas palustris (strain BisB18), this protein is Ribulose bisphosphate carboxylase.